Reading from the N-terminus, the 274-residue chain is Thiamine kinase (274 aa).

The protein belongs to the thiamine kinase family.

It carries out the reaction thiamine + ATP = thiamine phosphate + ADP + H(+). The protein operates within cofactor biosynthesis; thiamine diphosphate biosynthesis; thiamine phosphate from thiamine: step 1/1. In terms of biological role, catalyzes the ATP-dependent phosphorylation of thiamine to thiamine phosphate. Is involved in thiamine salvage. This is Thiamine kinase from Escherichia coli O139:H28 (strain E24377A / ETEC).